The following is a 469-amino-acid chain: MRLVWFRRDLRSFDNTALTAALNSGDPVAAMYIATPEQWHQHHLAPIQADLIWRRLAELQQELAALNVPLFYQQVADFQAAAVAVSQLAKTLNATQVLANRDYELDEQQRDQLAQQLLSEQGIIWSAFDDKCVLPPGSVRTKQGEFFKVFTPFKRAWLTLFQPPVIGKNRPVALWNVPSALAELVWHPEQAFDYPRIDSTPWAADFETVRAQLRDFCRERVQDYHQARDFPAREGTSSLSPYLAIGVLSARQCVARLYHESSMGELSEGAQVWLSELIWREFYQHLVAIEPNLSKSRDFVEWGARLEWWNDNEKFQLWCEGKTGYPIVDAAMRQLNQTGWMHNRLRMIVASFLTKDLHIDWRWGERYFMSRLIDGDYAANNGGWQWCASTGCDGQPYFRIFNPVSQGEKFDPNGDFIRRWVPELRSVSSAYIHQPWTYPAVNSVLYPARLVDHKQEREVTLRLYKTAKG.

A Photolyase/cryptochrome alpha/beta domain is found at 1-133 (MRLVWFRRDL…IWSAFDDKCV (133 aa)). (6R)-5,10-methylene-5,6,7,8-tetrahydrofolate is bound at residue glutamate 107.

This sequence belongs to the DNA photolyase class-1 family. As to quaternary structure, monomer. FAD is required as a cofactor. It depends on (6R)-5,10-methylene-5,6,7,8-tetrahydrofolate as a cofactor.

It carries out the reaction cyclobutadipyrimidine (in DNA) = 2 pyrimidine residues (in DNA).. Involved in repair of UV radiation-induced DNA damage. Catalyzes the light-dependent monomerization (300-600 nm) of cyclobutyl pyrimidine dimers (in cis-syn configuration), which are formed between adjacent bases on the same DNA strand upon exposure to ultraviolet radiation. This is Deoxyribodipyrimidine photo-lyase (phrA) from Vibrio cholerae serotype O1 (strain ATCC 39315 / El Tor Inaba N16961).